A 232-amino-acid chain; its full sequence is Ubiquinone biosynthesis O-methyltransferase (232 aa).

S-adenosyl-L-methionine-binding residues include arginine 36, glycine 55, aspartate 76, and methionine 120.

It belongs to the methyltransferase superfamily. UbiG/COQ3 family.

The catalysed reaction is a 3-demethylubiquinol + S-adenosyl-L-methionine = a ubiquinol + S-adenosyl-L-homocysteine + H(+). It carries out the reaction a 3-(all-trans-polyprenyl)benzene-1,2-diol + S-adenosyl-L-methionine = a 2-methoxy-6-(all-trans-polyprenyl)phenol + S-adenosyl-L-homocysteine + H(+). It functions in the pathway cofactor biosynthesis; ubiquinone biosynthesis. Its function is as follows. O-methyltransferase that catalyzes the 2 O-methylation steps in the ubiquinone biosynthetic pathway. The chain is Ubiquinone biosynthesis O-methyltransferase from Paraburkholderia phymatum (strain DSM 17167 / CIP 108236 / LMG 21445 / STM815) (Burkholderia phymatum).